A 448-amino-acid chain; its full sequence is N-succinylarginine dihydrolase (448 aa).

Substrate-binding positions include 19 to 28, N110, and 137 to 138; these read GGLSYGNVAS and HR. The active site involves E174. Residue R214 participates in substrate binding. H250 is an active-site residue. Residues D252 and N365 each contribute to the substrate site. Residue C371 is the Nucleophile of the active site.

This sequence belongs to the succinylarginine dihydrolase family. Homodimer.

The catalysed reaction is N(2)-succinyl-L-arginine + 2 H2O + 2 H(+) = N(2)-succinyl-L-ornithine + 2 NH4(+) + CO2. It participates in amino-acid degradation; L-arginine degradation via AST pathway; L-glutamate and succinate from L-arginine: step 2/5. Functionally, catalyzes the hydrolysis of N(2)-succinylarginine into N(2)-succinylornithine, ammonia and CO(2). The chain is N-succinylarginine dihydrolase from Pseudomonas paraeruginosa (strain DSM 24068 / PA7) (Pseudomonas aeruginosa (strain PA7)).